A 367-amino-acid chain; its full sequence is Putative zinc metalloprotease mll0638 (367 aa).

His20 lines the Zn(2+) pocket. Glu21 is an active-site residue. His24 lines the Zn(2+) pocket. The next 3 membrane-spanning stretches (helical) occupy residues 108-130 (ATVV…VLFA), 291-313 (LGFE…LNLL), and 343-365 (MAYR…NDLF). A PDZ domain is found at 121-196 (TIVVFSVLFA…ITFVMLRDGK (76 aa)).

The protein belongs to the peptidase M50B family. It depends on Zn(2+) as a cofactor.

It is found in the cell inner membrane. The polypeptide is Putative zinc metalloprotease mll0638 (Mesorhizobium japonicum (strain LMG 29417 / CECT 9101 / MAFF 303099) (Mesorhizobium loti (strain MAFF 303099))).